The primary structure comprises 115 residues: Waprin-like protein (115 aa).

An N-terminal signal peptide occupies residues 1 to 21; that stretch reads MNRSLLAFAIVLVLLVAGTSS. The region spanning 23-69 is the WAP domain; the sequence is LFNKSGNCPMRNTVTSCTPRCIGDGECSSNQKCCPNKCGTTSCANSS. Disulfide bonds link C30–C56, C39–C60, C43–C55, and C49–C65.

Belongs to the venom waprin family. Cys-rich waprin subfamily. In terms of tissue distribution, expressed by the venom gland.

It is found in the secreted. Antimicrobial peptides with activity against Gram-positive and Gram-negative bacteria as well as fungi. Recognizes carbohydrates in the microbial cell walls, and induces structural damage to them. Also inhibits microbial serine proteases, as well as mammalian elastases. Carbohydrates that are recognized are LPS, mannan, peptidoglycan, and N-acetl-D-glucosamine. This is Waprin-like protein from Tetramorium bicarinatum (Tramp ant).